The primary structure comprises 369 residues: Anhydro-N-acetylmuramic acid kinase (369 aa).

An ATP-binding site is contributed by G12–D19.

This sequence belongs to the anhydro-N-acetylmuramic acid kinase family.

The catalysed reaction is 1,6-anhydro-N-acetyl-beta-muramate + ATP + H2O = N-acetyl-D-muramate 6-phosphate + ADP + H(+). It functions in the pathway amino-sugar metabolism; 1,6-anhydro-N-acetylmuramate degradation. The protein operates within cell wall biogenesis; peptidoglycan recycling. Catalyzes the specific phosphorylation of 1,6-anhydro-N-acetylmuramic acid (anhMurNAc) with the simultaneous cleavage of the 1,6-anhydro ring, generating MurNAc-6-P. Is required for the utilization of anhMurNAc either imported from the medium or derived from its own cell wall murein, and thus plays a role in cell wall recycling. In Shewanella baltica (strain OS223), this protein is Anhydro-N-acetylmuramic acid kinase.